Reading from the N-terminus, the 216-residue chain is 3-isopropylmalate dehydratase small subunit (216 aa).

Belongs to the LeuD family. LeuD type 1 subfamily. Heterodimer of LeuC and LeuD.

The catalysed reaction is (2R,3S)-3-isopropylmalate = (2S)-2-isopropylmalate. It functions in the pathway amino-acid biosynthesis; L-leucine biosynthesis; L-leucine from 3-methyl-2-oxobutanoate: step 2/4. Its function is as follows. Catalyzes the isomerization between 2-isopropylmalate and 3-isopropylmalate, via the formation of 2-isopropylmaleate. This Bordetella avium (strain 197N) protein is 3-isopropylmalate dehydratase small subunit.